The following is a 506-amino-acid chain: Histidine--tRNA ligase (506 aa).

Belongs to the class-II aminoacyl-tRNA synthetase family. Homodimer.

Its subcellular location is the cytoplasm. It catalyses the reaction tRNA(His) + L-histidine + ATP = L-histidyl-tRNA(His) + AMP + diphosphate + H(+). The chain is Histidine--tRNA ligase (hisS) from Bradyrhizobium diazoefficiens (strain JCM 10833 / BCRC 13528 / IAM 13628 / NBRC 14792 / USDA 110).